Here is a 506-residue protein sequence, read N- to C-terminus: Xaa-Pro aminopeptidase 3 (506 aa).

The N-terminal 31 residues, 1 to 31 (MLSLLSTPRLVPVIARLRGLSGCMSCLQRRY), are a transit peptide targeting the mitochondrion. The segment at 54-79 (HPHLLRPGEVTPGLSQVEYALRRHKL) is interaction with TNFRSF1B. Residues Tyr300, Asp331, Asp342, His423, His430, Glu450, and Glu474 each coordinate substrate. 3 residues coordinate Mn(2+): Asp331, Asp342, and His423. Mn(2+) contacts are provided by Glu450 and Glu474.

The protein belongs to the peptidase M24B family. As to quaternary structure, homodimer. Interacts with TNFRSF1B/TNFR2 (activated) and TRAF2. It depends on Mn(2+) as a cofactor. In terms of tissue distribution, expressed in the kidney, specifically in intercalated cells, but not in principal cells, of the distal convoluted tubule and cortical collecting duct (at protein level).

Its subcellular location is the mitochondrion. It is found in the cytoplasm. It carries out the reaction Release of any N-terminal amino acid, including proline, that is linked to proline, even from a dipeptide or tripeptide.. Catalyzes the removal of a penultimate prolyl residue from the N-termini of peptides, such as Leu-Pro-Ala. Also shows low activity towards peptides with Ala or Ser at the P1 position. Promotes TNFRSF1B-mediated phosphorylation of MAPK8/JNK1 and MAPK9/JNK2, suggesting a function as an adapter protein for TNFRSF1B; the effect is independent of XPNPEP3 peptidase activity. May inhibit apoptotic cell death induced via TNF-TNFRSF1B signaling. This Rattus norvegicus (Rat) protein is Xaa-Pro aminopeptidase 3 (Xpnpep3).